The following is a 207-amino-acid chain: MKAMRYEQISENAFKGKIQVYLEQILGDASLILKTLHEKDQCLLCELDDLGHVFQDMQGIASSFYLQSYIEEFTPAFIELAKAIKALSEHKHGALIVIERADPVERFIQKGTSLHAEISSSLIESIFFPGNPLHDGALLVRENKLVSAANVLPLTTKEVDIHLGTRHRAALGMSGYTDALVLVVSEETGKMSFAKDGVLYPLISPRT.

Positions 13–37 form a coiled coil; the sequence is AFKGKIQVYLEQILGDASLILKTLH. The DAC domain occupies 63 to 205; sequence SFYLQSYIEE…DGVLYPLISP (143 aa).

It belongs to the adenylate cyclase family. DacB/CdaS subfamily. As to quaternary structure, forms dimers and probably also hexamers; the dimer may be active while the hexamer may not be active.

It catalyses the reaction 2 ATP = 3',3'-c-di-AMP + 2 diphosphate. Functionally, one of 3 paralogous diadenylate cyclases (DAC) in this bacteria, catalyzing the condensation of 2 ATP molecules into cyclic di-AMP (c-di-AMP). Upon expression in E.coli leads to c-di-AMP synthesis. Overexpression of the hyperactive mutant (L44F) in the absence of c-di-AMP phosphodiesterase GdpP leads to growth defects in log phase (long curly cell filaments) that disappear upon sporulation; spore formation is normal, showing sporulation is insensitive to the excess c-di-AMP. In B.subtilis c-di-AMP is a second messenger that mediates growth, DNA repair and cell wall homeostasis; it is toxic when present in excess. The polypeptide is Cyclic di-AMP synthase CdaS (Bacillus subtilis (strain 168)).